Here is a 211-residue protein sequence, read N- to C-terminus: Urease accessory protein UreE (211 aa).

The segment at 170–211 (EHHGHSHDRGCDHSHSHSHDHDHDHGHVHGPGCGHAPHHRHD) is disordered. Over residues 176–196 (HDRGCDHSHSHSHDHDHDHGH) the composition is skewed to basic and acidic residues.

Belongs to the UreE family.

The protein localises to the cytoplasm. Functionally, involved in urease metallocenter assembly. Binds nickel. Probably functions as a nickel donor during metallocenter assembly. This chain is Urease accessory protein UreE, found in Ralstonia nicotianae (strain ATCC BAA-1114 / GMI1000) (Ralstonia solanacearum).